The chain runs to 357 residues: Serpentine receptor class epsilon-31 (357 aa).

7 helical membrane passes run 28 to 48, 61 to 81, 121 to 141, 165 to 185, 192 to 212, 253 to 273, and 283 to 303; these read VISIFELLSYILCGYILNLSI, LMFLTVPLFAIWYELIIGKFI, LLIFGGFLQWHTIYSIVFGIL, IPIFLIIICQVLAIFMTFIVI, IIARLPFIFLCPISFAVWLFV, LVAVVLVYIMVCFLGIVSLTF, and FVENFLFFHPIPICLTAMFSI.

It belongs to the nematode receptor-like protein sre family.

It localises to the membrane. This chain is Serpentine receptor class epsilon-31 (sre-31), found in Caenorhabditis elegans.